We begin with the raw amino-acid sequence, 828 residues long: Outer membrane usher protein PmfC (828 aa).

Residues 1–28 (MLIPYSPHTIWKTICATLLLSLAFFSQA) form the signal peptide.

This sequence belongs to the fimbrial export usher family.

The protein localises to the cell outer membrane. Functionally, involved in the export and assembly of PMF fimbrial subunits across the outer membrane. The polypeptide is Outer membrane usher protein PmfC (pmfC) (Proteus mirabilis (strain HI4320)).